A 423-amino-acid chain; its full sequence is T-box protein 2 (423 aa).

The segment at residues 70–243 (LWQQFSQCGT…NNPFAKGFRD (174 aa)) is a DNA-binding region (T-box). 2 disordered regions span residues 238 to 324 (AKGF…PLRS) and 384 to 423 (VEAT…LSKP). The span at 261 to 283 (DATQSPPGKTASLPTHSPHPSES) shows a compositional bias: polar residues. Residues 302–317 (TPTTSSLSTSTTPTLS) are compositionally biased toward low complexity. Basic and acidic residues predominate over residues 394–404 (AEKPEVKKEQK).

Sumoylated. Expressed in body wall muscles and a subset of pharyngeal neurons. Expressed in head neurons and occassionally tail neurons. Not expressed in the pharynx.

It localises to the nucleus. In terms of biological role, involved in the transcriptional regulation of genes required for the development of pharyngeal muscles derived from the ABa lineage. Acts as a transcriptional repressor and binds to T-box binding sites in its own promoter to negatively autoregulate its own expression in neurons, seam cells and the gut in order to restrict its expression to certain tissues. May function together with the nfya-1-NF-Y complex to repress its own expression. Plays a role in neural fate specification in the hermaphrodite-specific neuron (HSN)/PHB neuron lineage, acting in concert with homeobox protein egl-5 and the asymmetric cell division protein ham-1. The protein is T-box protein 2 of Caenorhabditis elegans.